Consider the following 495-residue polypeptide: Putative BTB/POZ domain-containing protein L98 (495 aa).

The 71-residue stretch at 15–85 (SDLTIEFVDN…FYGIETTNDY (71 aa)) folds into the BTB domain.

This sequence belongs to the mimivirus BTB/WD family.

This Acanthamoeba polyphaga (Amoeba) protein is Putative BTB/POZ domain-containing protein L98.